The chain runs to 813 residues: MAWPCITRACCIARFWNQLDKADIAVPLVFTKYSEATEHPGAPPQPPPPQQQAQPALAPPSARAVAIETQPAQGELDAVARATGPAPGPTGEREPAAGPGRSGPGPGLGSGSTSGPADSVMRQDYRAWKVQRPEPSCRPRSEYQPSDAPFERETQYQKDFRAWPLPRRGDHPWIPKPVQISAASQASAPILGAPKRRPQSQERWPVQAAAEAREQEAAPGGAGGLAAGKASGADERDTRRKAGPAWIVRRAEGLGHEQTPLPAAQAQVQATGPEAGRGRAAADALNRQIREEVASAVSSSYRNEFRAWTDIKPVKPIKAKPQYKPPDDKMVHETSYSAQFKGEASKPTTADNKVIDRRRIRSLYSEPFKEPPKVEKPSVQSSKPKKTSASHKPTRKAKDKQAVSGQAAKKKSAEGPSTTKPDDKEQSKEMNNKLAEAKESLAQPVSDSSKTQGPVATEPDKDQGSVVPGLLKGQGPMVQEPLKKQGSVVPGPPKDLGPMIPLPVKDQDHTVPEPLKNESPVISAPVKDQGPSVPVPPKNQSPMVPAKVKDQGSVVPESLKDQGPRIPEPVKNQAPMVPAPVKDEGPMVSASVKDQGPMVSAPVKDQGPIVPAPVKGEGPIVPAPVKDEGPMVSAPIKDQDPMVPEHPKDESAMATAPIKNQGSMVSEPVKNQGLVVSGPVKDQDVVVPEHAKVHDSAVVAPVKNQGPVVPESVKNQDPILPVLVKDQGPTVLQPPKNQGRIVPEPLKNQVPIVPVPLKDQDPLVPVPAKDQGPAVPEPLKTQGPRDPQLPTVSPLPRVMIPTAPHTEYIESSP.

Residues C5, C10, and C11 are each lipidated (S-palmitoyl cysteine). 3 disordered regions span residues 36 to 283, 314 to 651, and 756 to 813; these read ATEH…AAAD, VKPI…KDES, and PLKD…ESSP. Residues 41–50 are compositionally biased toward pro residues; it reads GAPPQPPPPQ. The span at 51-62 shows a compositional bias: low complexity; the sequence is QQAQPALAPPSA. Residues 100-112 are compositionally biased toward gly residues; it reads GRSGPGPGLGSGS. At S102 the chain carries Phosphoserine. A mn 1 region spans residues 118–141; it reads DSVMRQDYRAWKVQRPEPSCRPRS. The span at 121 to 141 shows a compositional bias: basic and acidic residues; sequence MRQDYRAWKVQRPEPSCRPRS. Residues 126 to 140 form a calmodulin-binding region; the sequence is RAWKVQRPEPSCRPR. The residue at position 143 (Y143) is a Phosphotyrosine. The segment covering 149-173 has biased composition (basic and acidic residues); that stretch reads PFERETQYQKDFRAWPLPRRGDHPW. Positions 153–176 are mn 2; that stretch reads ETQYQKDFRAWPLPRRGDHPWIPK. Residues 162–176 form a calmodulin-binding region; sequence AWPLPRRGDHPWIPK. Phosphoserine is present on S187. Calmodulin-binding regions lie at residues 189–203, 306–320, 357–371, and 384–398; these read PILG…SQER, RAWT…IKAK, RRRI…FKEP, and PKKT…RKAK. The interval 298–321 is mn 3; that stretch reads SSSYRNEFRAWTDIKPVKPIKAKP. A compositionally biased stretch (basic and acidic residues) spans 367-376; that stretch reads PFKEPPKVEK. Residues 383–398 are compositionally biased toward basic residues; sequence KPKKTSASHKPTRKAK. Residues 420–439 are compositionally biased toward basic and acidic residues; that stretch reads KPDDKEQSKEMNNKLAEAKE. The segment covering 443–454 has biased composition (polar residues); the sequence is QPVSDSSKTQGP. Residues 637–651 show a composition bias toward basic and acidic residues; sequence KDQDPMVPEHPKDES. The residue at position 812 (S812) is a Phosphoserine.

This sequence belongs to the STOP family. As to quaternary structure, interacts with calmodulin (via C-terminus); the interaction is dependent on Ca(2+). Interacts (via C-terminus) with TMEM106B (via N-terminus). Interacts with ZDHHC17 (via ANK repeats). Interacts with ZDHHC13 (via ANK repeats). Post-translationally, palmitoylated. Probably depalmitoylated by ABHD17A, ABHD17B and ABHD17C. During neuronal polarization, palmitoylation and depalmitoylation cycles regulate MAP6 shuttling between secretory vesicles and microtubules, and its polarized distribution in the axon. In terms of tissue distribution, expressed in brain (at protein level). Expressed in spinal cord. Isoform 2 expression is up-regulated in the prefrontal cortex (Brodmann's area 46) of patients with schizophrenia (postmortem brain study).

It localises to the cytoplasm. It is found in the cytoskeleton. The protein localises to the golgi apparatus. Its subcellular location is the cell projection. The protein resides in the axon. It localises to the dendrite. It is found in the cytoplasmic vesicle. The protein localises to the secretory vesicle membrane. Involved in microtubule stabilization in many cell types, including neuronal cells. Specifically has microtubule cold stabilizing activity. Involved in dendrite morphogenesis and maintenance by regulating lysosomal trafficking via its interaction with TMEM106B. Regulates KIF5A-mediated axonal cargo transport. Regulates axonal growth during neuron polarization. In Homo sapiens (Human), this protein is Microtubule-associated protein 6 (MAP6).